Reading from the N-terminus, the 1201-residue chain is DNA-directed RNA polymerase subunit beta (1201 aa).

Residues 1165–1201 (DALSKFKQQQDEKAADKAAKADAAKPSETTNAQQDNQ) form a disordered region. Positions 1172-1189 (QQQDEKAADKAAKADAAK) are enriched in basic and acidic residues. Over residues 1191-1201 (SETTNAQQDNQ) the composition is skewed to polar residues.

The protein belongs to the RNA polymerase beta chain family. As to quaternary structure, the RNAP catalytic core consists of 2 alpha, 1 beta, 1 beta' and 1 omega subunit. When a sigma factor is associated with the core the holoenzyme is formed, which can initiate transcription.

The catalysed reaction is RNA(n) + a ribonucleoside 5'-triphosphate = RNA(n+1) + diphosphate. In terms of biological role, DNA-dependent RNA polymerase catalyzes the transcription of DNA into RNA using the four ribonucleoside triphosphates as substrates. The sequence is that of DNA-directed RNA polymerase subunit beta from Lactiplantibacillus plantarum (strain ATCC BAA-793 / NCIMB 8826 / WCFS1) (Lactobacillus plantarum).